The chain runs to 109 residues: Homeobox protein E30 (109 aa).

Positions 1-12 (GPRTRRVKRSHN) are enriched in basic residues. Residues 1–27 (GPRTRRVKRSHNGKNGSPEEKRPRTAF) are disordered. Positions 20–79 (EKRPRTAFSAEQLARLKREFAENRYLTERRRQQLSRDLGLTEAQIKIWFQNKRAKIKKAS) form a DNA-binding region, homeobox.

This sequence belongs to the engrailed homeobox family.

It is found in the nucleus. The polypeptide is Homeobox protein E30 (Apis mellifera (Honeybee)).